A 381-amino-acid chain; its full sequence is MYG1 exonuclease (381 aa).

A mitochondrion-targeting transit peptide spans 1–47 (MGRGFLRGVLTLLPLRSVLQVQHCMLVSEPDLPPKRPRNNLMAPPRI). 2 positions are modified to N6-acetyllysine: Lys267 and Lys273.

Belongs to the MYG1 family.

The protein resides in the nucleus. Its subcellular location is the nucleoplasm. It localises to the mitochondrion matrix. The protein localises to the nucleolus. Its function is as follows. 3'-5' RNA exonuclease which cleaves in situ on specific transcripts in both nucleus and mitochondrion. Involved in regulating spatially segregated organellar RNA processing, acts as a coordinator of nucleo-mitochondrial crosstalk. In nucleolus, processes pre-ribosomal RNA involved in ribosome assembly and alters cytoplasmic translation. In mitochondrial matrix, processes 3'-termini of the mito-ribosomal and messenger RNAs and controls translation of mitochondrial proteins. The sequence is that of MYG1 exonuclease from Rattus norvegicus (Rat).